The sequence spans 475 residues: Ataxin-10 (475 aa).

The residue at position 10 (Arg-10) is an Omega-N-methylarginine. Residues Ser-12 and Ser-77 each carry the phosphoserine modification. Residue Thr-82 is modified to Phosphothreonine. Ser-430 carries the post-translational modification Phosphoserine.

This sequence belongs to the ataxin-10 family. Homooligomer. Interacts with GNB2. Interacts with IQCB1. Interacts with OGT. Polyubiquitinated. In terms of processing, phosphorylation at Ser-12 by AURKB promotes the association of ATXN10 with PLK1. Phosphorylation at Ser-77 and Thr-82 by PLK1 may play a role in the regulation of cytokinesis and may stimulate the proteasome-mediated degradation of ATXN10.

The protein resides in the cytoplasm. Its subcellular location is the perinuclear region. It is found in the midbody. The protein localises to the cytoskeleton. It localises to the cilium basal body. The protein resides in the microtubule organizing center. Its subcellular location is the centrosome. It is found in the centriole. Functionally, may play a role in the regulation of cytokinesis. May play a role in signaling by stimulating protein glycosylation. Induces neuritogenesis by activating the Ras-MAP kinase pathway and is necessary for the survival of cerebellar neurons. Does not appear to play a major role in ciliogenesis. This is Ataxin-10 (ATXN10) from Macaca fascicularis (Crab-eating macaque).